Here is a 1457-residue protein sequence, read N- to C-terminus: Bridge-like lipid transfer protein family member 3B (1457 aa).

One can recognise a Chorein N-terminal domain in the interval 3 to 94 (GIIKKQILKH…DKVIMEMSTC (92 aa)). 2 disordered regions span residues 267 to 295 (STEQRKSMAPEPTQSSTVTSSAQHVKTPQ) and 409 to 449 (DRNL…PQPS). Polar residues predominate over residues 278–295 (PTQSSTVTSSAQHVKTPQ). Residues S414, S418, S774, and S934 each carry the phosphoserine modification. Disordered stretches follow at residues 975–1038 (SEDE…TGKG), 1056–1099 (ASLS…LSVS), and 1145–1183 (SNTSCQSPAESVNTSANTQTCGEASPEAVSTNSEGTQEN). Over residues 980–995 (SGLSHKSGSGEMTSEG) the composition is skewed to polar residues. S1008 is modified (phosphoserine). Polar residues predominate over residues 1145 to 1180 (SNTSCQSPAESVNTSANTQTCGEASPEAVSTNSEGT). Residues 1410-1455 (ANFLDITREQLMEENECLRQRLAQAKMELAEAHSARDELLHQMKRM) are a coiled coil.

As to quaternary structure, homodimer (via N-terminus). Associates with the Golgi-associated retrograde protein (GARP) complex. Interacts with GARP complex component VPS52. Interacts (via C-terminal coiled-coil domain) with STX6.

Its subcellular location is the cytoplasm. The protein resides in the cytosol. It localises to the early endosome. Its function is as follows. Tube-forming lipid transport protein which mediates the transfer of lipids between membranes at organelle contact sites. Required for retrograde traffic of vesicle clusters in the early endocytic pathway to the Golgi complex. The protein is Bridge-like lipid transfer protein family member 3B (Bltp3b) of Mus musculus (Mouse).